A 989-amino-acid polypeptide reads, in one-letter code: Putative transcription elongation factor SPT5 homolog 2 (989 aa).

Residues 1–26 (MSQYSDDDYSHEDDSEMEDEDEEDEY) are compositionally biased toward acidic residues. The segment at 1–82 (MSQYSDDDYS…VEDDDDDVDV (82 aa)) is disordered. Over residues 31–42 (SRKGRSGKKRGR) the composition is skewed to basic residues. Residues 65-82 (WEVEVDDDVEDDDDDVDV) show a composition bias toward acidic residues. KOW domains follow at residues 260–287 (DLSRDSWVRMKLGIYKGDLAQVVDVDNV), 412–439 (HFMKGDAVIVIKGDLKNLKGWIEKVDEE), 464–491 (YFEPGNFVKVVSGIHEGGTGMIVKVDQH), 588–615 (VVAVKDVVRVIEGPSKGKQGPVVQIYKG), and 683–710 (DHLVGTYVKIRLGPFKGYSGRLVEVKDK). Residues 790 to 852 (MSPPRDNWED…SPMTPSSTSY (63 aa)) are disordered. The segment covering 842-852 (PSPMTPSSTSY) has biased composition (low complexity). The KOW 6 domain occupies 936–963 (CPKKNERVKILGGKYCGSTAKVIGEDGQ).

The protein belongs to the SPT5 family.

The protein localises to the nucleus. Its function is as follows. May regulate transcription elongation by RNA polymerase II. May enhance transcriptional pausing at sites proximal to the promoter, which may in turn facilitate the assembly of an elongation competent RNA polymerase II complex. The protein is Putative transcription elongation factor SPT5 homolog 2 of Arabidopsis thaliana (Mouse-ear cress).